The following is a 96-amino-acid chain: Protein transport protein Sec61 subunit beta (96 aa).

Residues 1-17 (MPGPTPSGTNVGSSGRS) show a composition bias toward polar residues. The tract at residues 1 to 54 (MPGPTPSGTNVGSSGRSPSKAVAARAAGSTVRQRKNASCGTRSAGRTTSAGTGG) is disordered. Proline 2 bears the N-acetylproline mark. Residues 2 to 71 (PGPTPSGTNV…DSPGLKVGPV (70 aa)) lie on the Cytoplasmic side of the membrane. Position 7 is a phosphoserine (serine 7). The residue at position 9 (threonine 9) is a Phosphothreonine. Phosphoserine is present on residues serine 13, serine 14, and serine 17. A lipid anchor (S-palmitoyl cysteine) is attached at cysteine 39. Residues 40 to 50 (GTRSAGRTTSA) are compositionally biased toward low complexity. Residues 72–91 (PVLVMSLLFIASVFMLHIWG) traverse the membrane as a helical segment. Topologically, residues 92–96 (KYTRS) are lumenal.

Belongs to the SEC61-beta family. As to quaternary structure, the SEC61 channel-forming translocon complex consists of channel-forming core components SEC61A1, SEC61B and SEC61G and different auxiliary components such as SEC62 and SEC63. The SEC61 channel associates with the multi-pass translocon (MPT) complex. Interacts with TRAM1.

The protein localises to the endoplasmic reticulum membrane. Its function is as follows. Component of SEC61 channel-forming translocon complex that mediates transport of signal peptide-containing precursor polypeptides across the endoplasmic reticulum (ER). Forms a ribosome receptor and a gated pore in the ER membrane, both functions required for cotranslational translocation of nascent polypeptides. The SEC61 channel is also involved in ER membrane insertion of transmembrane proteins: it mediates membrane insertion of the first few transmembrane segments of proteins, while insertion of subsequent transmembrane regions of multi-pass membrane proteins is mediated by the multi-pass translocon (MPT) complex. The SEC61 channel cooperates with the translocating protein TRAM1 to import nascent proteins into the ER. This chain is Protein transport protein Sec61 subunit beta (SEC61B), found in Canis lupus familiaris (Dog).